Here is a 269-residue protein sequence, read N- to C-terminus: MSRIAKRFAKLKAENRAALVTFITAGDPDHATSQALLDGMPAAGADIIELGMPFTDPMADGPAIQLAAGRALAAGGSLRQTLEMVEAFRKTDAETPIILMGYYNPVYAWGAEKFAADAAKAGVDGLIIVDLPPEEADELVPFLRQAGIDFIVLTTPTSDDARLPVVLANASGFVYYVSIAGITGTASAAQSAIDEAVARIRRHTGLPVCVGFGIKDPAQAAEVARVADGAVVGSAIVSVLADNIGKPGAVSAPLALVKDLAAGVRGARN.

Catalysis depends on proton acceptor residues Glu-49 and Asp-60.

Belongs to the TrpA family. In terms of assembly, tetramer of two alpha and two beta chains.

It catalyses the reaction (1S,2R)-1-C-(indol-3-yl)glycerol 3-phosphate + L-serine = D-glyceraldehyde 3-phosphate + L-tryptophan + H2O. It participates in amino-acid biosynthesis; L-tryptophan biosynthesis; L-tryptophan from chorismate: step 5/5. Functionally, the alpha subunit is responsible for the aldol cleavage of indoleglycerol phosphate to indole and glyceraldehyde 3-phosphate. In Paramagnetospirillum magneticum (strain ATCC 700264 / AMB-1) (Magnetospirillum magneticum), this protein is Tryptophan synthase alpha chain.